Consider the following 213-residue polypeptide: Adenylyl-sulfate kinase (213 aa).

The span at 1 to 17 shows a compositional bias: basic and acidic residues; it reads MPAHQLDDHNQETRSDD. The segment at 1-20 is disordered; the sequence is MPAHQLDDHNQETRSDDENI. 47-54 contributes to the ATP binding site; it reads GLSGSGKS. Ser-121 (phosphoserine intermediate) is an active-site residue.

This sequence belongs to the APS kinase family.

It catalyses the reaction adenosine 5'-phosphosulfate + ATP = 3'-phosphoadenylyl sulfate + ADP + H(+). Its pathway is sulfur metabolism; hydrogen sulfide biosynthesis; sulfite from sulfate: step 2/3. Functionally, catalyzes the synthesis of activated sulfate. In Yersinia pestis, this protein is Adenylyl-sulfate kinase.